Reading from the N-terminus, the 340-residue chain is Protein S-acyltransferase 10 (340 aa).

2 helical membrane-spanning segments follow: residues 34–54 (LLLK…LFLF) and 66–86 (PWYM…YFVT). The region spanning 162-212 (LTCGYCHVEQPPRTKHCHDCDRCVLQFDHHCVWLGTCIGQKNHSKFWWYIC) is the DHHC domain. Residue Cys192 is the S-palmitoyl cysteine intermediate of the active site. 2 helical membrane-spanning segments follow: residues 207 to 227 (FWWY…MYVD) and 241 to 261 (IIIL…LLLI).

It belongs to the DHHC palmitoyltransferase family. As to expression, expressed in mature embryos, embryo sacs, cotyledons, whole seedlings, hydathodes, guard cells, sites of lateral root initiation, root tips and phloem, but not in xylem.

It is found in the vacuole membrane. The catalysed reaction is L-cysteinyl-[protein] + hexadecanoyl-CoA = S-hexadecanoyl-L-cysteinyl-[protein] + CoA. In terms of biological role, S-acyltransferase involved in protein lipid modification. Catalyzes the palmitoylation of proteins peripheral or integral to the tonoplast. Required for the tonoplast localization of CBL2, CBL3 and CBL6, but not for the plasma membrane localization of CBL9, for the endosome localization of RABF1 or for the endomembrane localization of RABF2B. This Arabidopsis thaliana (Mouse-ear cress) protein is Protein S-acyltransferase 10 (PAT10).